Reading from the N-terminus, the 1077-residue chain is Ubiquitin carboxyl-terminal hydrolase 28 (1077 aa).

The interval 60–80 is disordered; sequence DERVKEPSQDTVATEPSEVEG. At Ser67 the chain carries Phosphoserine. The UIM domain maps to 97-116; the sequence is DNKDDLQAAIALSLLESPKI. Lys99 is covalently cross-linked (Glycyl lysine isopeptide (Lys-Gly) (interchain with G-Cter in SUMO2)). A USP domain is found at 162–650; sequence VGLKNVGNTC…SAYCLMYIND (489 aa). Residue Cys171 is the Nucleophile of the active site. Ser375 is subject to Phosphoserine. The segment at 477 to 535 is disordered; the sequence is HCSVSDQTSKESTSTESSSQDVESTFSSPEDSLPKSKPLTSSRSSMEMPSQPAPRTVTD. The segment covering 481–501 has biased composition (low complexity); it reads SDQTSKESTSTESSSQDVEST. Over residues 514-524 the composition is skewed to polar residues; the sequence is PLTSSRSSMEM. Ser550 bears the Phosphoserine mark. The active-site Proton acceptor is the His600. A disordered region spans residues 697–728; sequence EEQSCKIPQMESSTNSSSQDYSTSQEPSVASS. Residues 707–724 are compositionally biased toward low complexity; that stretch reads ESSTNSSSQDYSTSQEPS. Ser714 bears the Phosphoserine mark. Residue Lys759 forms a Glycyl lysine isopeptide (Lys-Gly) (interchain with G-Cter in SUMO2) linkage. At Thr1048 the chain carries Phosphothreonine.

It belongs to the peptidase C19 family. USP28 subfamily. Interacts with ZNF304. Interacts with PRKD1. Interacts with TP53BP1. Interacts with isoform 1 of FBXW7; following DNA damage, dissociates from FBXW7 leading to degradation of MYC. Post-translationally, degraded upon nickel ion level or hypoxia exposure. In terms of processing, phosphorylated upon DNA damage at Ser-67 and Ser-714, by ATM or ATR. Phosphorylated by PRKD1.

It is found in the nucleus. The protein localises to the nucleoplasm. It carries out the reaction Thiol-dependent hydrolysis of ester, thioester, amide, peptide and isopeptide bonds formed by the C-terminal Gly of ubiquitin (a 76-residue protein attached to proteins as an intracellular targeting signal).. Deubiquitinase involved in DNA damage response checkpoint and MYC proto-oncogene stability. Involved in DNA damage induced apoptosis by specifically deubiquitinating proteins of the DNA damage pathway such as CLSPN. Also involved in G2 DNA damage checkpoint, by deubiquitinating CLSPN, and preventing its degradation by the anaphase promoting complex/cyclosome (APC/C). In contrast, it does not deubiquitinate PLK1. Specifically deubiquitinates MYC in the nucleoplasm, leading to prevent MYC degradation by the proteasome: acts by specifically interacting with isoform 1 of FBXW7 (FBW7alpha) in the nucleoplasm and counteracting ubiquitination of MYC by the SCF(FBW7) complex. In contrast, it does not interact with isoform 4 of FBXW7 (FBW7gamma) in the nucleolus, allowing MYC degradation and explaining the selective MYC degradation in the nucleolus. Deubiquitinates ZNF304, hence preventing ZNF304 degradation by the proteasome and leading to the activated KRAS-mediated promoter hypermethylation and transcriptional silencing of tumor suppressor genes (TSGs) in a subset of colorectal cancers (CRC) cells. The polypeptide is Ubiquitin carboxyl-terminal hydrolase 28 (USP28) (Homo sapiens (Human)).